Reading from the N-terminus, the 684-residue chain is Gabija protein GajB (684 aa).

One can recognise a UvrD-like helicase ATP-binding domain in the interval 14 to 351 (EQKSINAIFN…IEVINKIRND (338 aa)). Residue 35-42 (SGAGAGKT) coordinates ATP.

It belongs to the helicase family. In terms of assembly, homodimer. Interacts with GajA; 2 GajB dimers dock at opposite sides of the GajA complex to form a 4:4 GajA-GajB assembly (GajAB). GajAB interacts with Bacillus phage Phi3T Gad1 protein; this interaction forms a 4:4:8 GajAB-Gad1 complex and leads to GajAB inhibition.

In terms of biological role, component of antiviral defense system Gabija type II, composed of GajA and GajB. Expression of Gabija type II in B.subtilis (strain BEST7003) confers resistance to phages phi105, and SpBeta. May be a helicase or contribute to GajA activation. The chain is Gabija protein GajB from Bacillus cereus (strain HuB5-5).